Reading from the N-terminus, the 329-residue chain is ADP-L-glycero-D-manno-heptose-6-epimerase (329 aa).

Residues 10–11 (FI), 31–32 (DD), K38, K53, 74–78 (QGACS), and N91 contribute to the NADP(+) site. The Proton acceptor role is filled by Y138. Residue K142 participates in NADP(+) binding. N167 provides a ligand contact to substrate. NADP(+)-binding residues include V168 and K176. K176 serves as the catalytic Proton acceptor. Residues R178, H185, 199–202 (FAGW), R212, and Y291 each bind substrate.

Belongs to the NAD(P)-dependent epimerase/dehydratase family. HldD subfamily. As to quaternary structure, homopentamer. The cofactor is NADP(+).

The enzyme catalyses ADP-D-glycero-beta-D-manno-heptose = ADP-L-glycero-beta-D-manno-heptose. The protein operates within nucleotide-sugar biosynthesis; ADP-L-glycero-beta-D-manno-heptose biosynthesis; ADP-L-glycero-beta-D-manno-heptose from D-glycero-beta-D-manno-heptose 7-phosphate: step 4/4. It functions in the pathway bacterial outer membrane biogenesis; LPS core biosynthesis. In terms of biological role, catalyzes the interconversion between ADP-D-glycero-beta-D-manno-heptose and ADP-L-glycero-beta-D-manno-heptose via an epimerization at carbon 6 of the heptose. The polypeptide is ADP-L-glycero-D-manno-heptose-6-epimerase (Bordetella pertussis (strain Tohama I / ATCC BAA-589 / NCTC 13251)).